A 283-amino-acid polypeptide reads, in one-letter code: Pantothenate synthetase (283 aa).

30 to 37 (MGNLHDGH) serves as a coordination point for ATP. His-37 functions as the Proton donor in the catalytic mechanism. A (R)-pantoate-binding site is contributed by Gln-61. Beta-alanine is bound at residue Gln-61. 149–152 (GEKD) provides a ligand contact to ATP. Gln-155 provides a ligand contact to (R)-pantoate. 186 to 189 (LSSR) provides a ligand contact to ATP.

Belongs to the pantothenate synthetase family. As to quaternary structure, homodimer.

Its subcellular location is the cytoplasm. The catalysed reaction is (R)-pantoate + beta-alanine + ATP = (R)-pantothenate + AMP + diphosphate + H(+). The protein operates within cofactor biosynthesis; (R)-pantothenate biosynthesis; (R)-pantothenate from (R)-pantoate and beta-alanine: step 1/1. Functionally, catalyzes the condensation of pantoate with beta-alanine in an ATP-dependent reaction via a pantoyl-adenylate intermediate. The chain is Pantothenate synthetase from Shigella dysenteriae serotype 1 (strain Sd197).